Here is a 2282-residue protein sequence, read N- to C-terminus: Acetyl-CoA carboxylase (2282 aa).

Positions 16-515 constitute a Biotin carboxylation domain; it reads NIEKILIANN…HTGWLDQLIS (500 aa). The region spanning 170–360 is the ATP-grasp domain; the sequence is YSECNGVPSE…LPATQLQIAM (191 aa). Residue 196–253 participates in ATP binding; that stretch reads AQRVGFPAMIKASEGGGGKGIRKVTSMEDLESSFRQVQNEVPGSPIFFMKLVSNARHL. The Mn(2+) site is built by Glu-319, Glu-331, and Asn-333. Arg-335 is a catalytic residue. Residues 646-720 enclose the Biotinyl-binding domain; the sequence is FSQEYDPSIL…APGAIIANLE (75 aa). Lys-687 bears the N6-biotinyllysine mark. A compositionally biased stretch (low complexity) spans 1109 to 1129; it reads GSNSGSPTYGSPLIRSISSSG. The segment at 1109–1141 is disordered; sequence GSNSGSPTYGSPLIRSISSSGGSSGGSGFQISP. One can recognise a CoA carboxyltransferase N-terminal domain in the interval 1495–1851; the sequence is PYPIMDAVQR…SGGEMVPIIS (357 aa). A carboxyltransferase region spans residues 1495-2178; that stretch reads PYPIMDAVQR…EEDKLKLIDK (684 aa). Arg-1761, Lys-2068, and Arg-2070 together coordinate CoA. One can recognise a CoA carboxyltransferase C-terminal domain in the interval 1852-2178; the sequence is PIDSPHRDIE…EEDKLKLIDK (327 aa).

It depends on biotin as a cofactor. Requires Mn(2+) as cofactor.

The protein resides in the cytoplasm. The enzyme catalyses hydrogencarbonate + acetyl-CoA + ATP = malonyl-CoA + ADP + phosphate + H(+). It catalyses the reaction N(6)-biotinyl-L-lysyl-[protein] + hydrogencarbonate + ATP = N(6)-carboxybiotinyl-L-lysyl-[protein] + ADP + phosphate + H(+). It functions in the pathway lipid metabolism; malonyl-CoA biosynthesis; malonyl-CoA from acetyl-CoA: step 1/1. Functionally, catalyzes the rate-limiting reaction in the biogenesis of long-chain fatty acids. Carries out three functions: biotin carboxyl carrier protein, biotin carboxylase and carboxyltransferase. The sequence is that of Acetyl-CoA carboxylase (accA) from Dictyostelium discoideum (Social amoeba).